Here is a 463-residue protein sequence, read N- to C-terminus: ATP-dependent protease ATPase subunit HslU (463 aa).

ATP is bound by residues valine 21, 63–68 (GVGKTE), aspartate 276, glutamate 341, and arginine 413.

It belongs to the ClpX chaperone family. HslU subfamily. In terms of assembly, a double ring-shaped homohexamer of HslV is capped on each side by a ring-shaped HslU homohexamer. The assembly of the HslU/HslV complex is dependent on binding of ATP.

The protein resides in the cytoplasm. Its function is as follows. ATPase subunit of a proteasome-like degradation complex; this subunit has chaperone activity. The binding of ATP and its subsequent hydrolysis by HslU are essential for unfolding of protein substrates subsequently hydrolyzed by HslV. HslU recognizes the N-terminal part of its protein substrates and unfolds these before they are guided to HslV for hydrolysis. The sequence is that of ATP-dependent protease ATPase subunit HslU from Thermotoga sp. (strain RQ2).